Consider the following 355-residue polypeptide: Probable butyrate kinase (355 aa).

The protein belongs to the acetokinase family.

The protein resides in the cytoplasm. It catalyses the reaction butanoate + ATP = butanoyl phosphate + ADP. The protein is Probable butyrate kinase of Listeria monocytogenes serotype 4a (strain HCC23).